The chain runs to 238 residues: Androgen-induced gene 1 protein (238 aa).

Topologically, residues 1 to 12 are cytoplasmic; that stretch reads MALVPCQVLRMA. Residues 13-30 traverse the membrane as a helical segment; that stretch reads ILLSYCSILCNYKAIEMP. The Extracellular segment spans residues 31 to 44; it reads SHQTYGGSWKFLTF. A helical transmembrane segment spans residues 45–67; that stretch reads IDLVIQAVFFGICVLTDLSSLLT. Topologically, residues 68 to 87 are cytoplasmic; sequence RGSGNQEQERQLKKLISLRD. A helical membrane pass occupies residues 88–110; that stretch reads WMLAVLAFPVGVFVVAVFWIIYA. Over 111–124 the chain is Extracellular; sequence YDREMIYPKLLDNF. The helical transmembrane segment at 125–144 threads the bilayer; sequence IPGWLNHGMHTTVLPFILIE. Topologically, residues 145–156 are cytoplasmic; it reads MRTSHHQYPSRS. A helical membrane pass occupies residues 157–179; that stretch reads SGLTAICTFSVGYILWVCWVHHV. Topologically, residues 180-193 are extracellular; the sequence is TGMWVYPFLEHIGP. The chain crosses the membrane as a helical span at residues 194–216; that stretch reads GARIIFFGSTTILMNFLYLLGEV. The Cytoplasmic portion of the chain corresponds to 217 to 238; that stretch reads LNNYIWDTQKSMEEEKEKPKLE.

Belongs to the AIG1 family. In terms of tissue distribution, highly expressed in heart, ovary, testis, liver, and kidney, at lower levels in spleen, prostate, brain, skeletal muscle, pancreas, small intestine and colon, and undetected in peripheral blood leukocytes, thymus, lung and placenta. AIG1 expression is higher in hair follicles from males than from females.

It is found in the cell membrane. It catalyses the reaction 9-hexadecanoyloxy-octadecanoate + H2O = 9-hydroxy-octadecanoate + hexadecanoate + H(+). It carries out the reaction 12-hexadecanoyloxy-octadecanoate + H2O = 12-hydroxyoctadecanoate + hexadecanoate + H(+). The catalysed reaction is 9-(9Z-hexadecenoyloxy)-octadecanoate + H2O = (9Z)-hexadecenoate + 9-hydroxy-octadecanoate + H(+). The enzyme catalyses 12-(9Z-hexadecenoyloxy)-octadecanoate + H2O = 12-hydroxyoctadecanoate + (9Z)-hexadecenoate + H(+). It catalyses the reaction 13-(9Z-hexadecenoyloxy)-octadecanoate + H2O = 13-hydroxy-octadecanoate + (9Z)-hexadecenoate + H(+). It carries out the reaction 9-octadecanoyloxy-octadecanoate + H2O = 9-hydroxy-octadecanoate + octadecanoate + H(+). The catalysed reaction is 12-octadecanoyloxy-octadecanoate + H2O = 12-hydroxyoctadecanoate + octadecanoate + H(+). The enzyme catalyses 13-octadecanoyloxy-octadecanoate + H2O = 13-hydroxy-octadecanoate + octadecanoate + H(+). It catalyses the reaction 9-(9Z-octadecenoyloxy)-octadecanoate + H2O = 9-hydroxy-octadecanoate + (9Z)-octadecenoate + H(+). It carries out the reaction 12-(9Z-octadecenoyloxy)-octadecanoate + H2O = 12-hydroxyoctadecanoate + (9Z)-octadecenoate + H(+). The catalysed reaction is 13-(9Z-octadecenoyloxy)-octadecanoate + H2O = 13-hydroxy-octadecanoate + (9Z)-octadecenoate + H(+). The enzyme catalyses 5-(9Z-hexadecenoyloxy)-octadecanoate + H2O = 5-hydroxy-octadecanoate + (9Z)-hexadecenoate + H(+). Inhibited by N-hydroxyhydantoin carbamate JJH260 and beta-lactone KC01. Hydrolyzes bioactive fatty-acid esters of hydroxy-fatty acids (FAHFAs), but not other major classes of lipids. Show a preference for FAHFAs with branching distal from the carboxylate head group of the lipids. In Homo sapiens (Human), this protein is Androgen-induced gene 1 protein (AIG1).